Consider the following 394-residue polypeptide: Nuclear hormone receptor family member nhr-18 (394 aa).

A DNA-binding region (nuclear receptor) is located at residues serine 8 to threonine 83. 2 consecutive NR C4-type zinc fingers follow at residues cysteine 11–cysteine 31 and cysteine 48–cysteine 71. The region spanning methionine 134–threonine 394 is the NR LBD domain.

It belongs to the nuclear hormone receptor family.

It is found in the nucleus. Functionally, orphan nuclear receptor. The chain is Nuclear hormone receptor family member nhr-18 (nhr-18) from Caenorhabditis elegans.